Consider the following 358-residue polypeptide: MRDRLLAAEKVKAIDWRDGALHLLDQRVLPFEENWIAYTSAAGVAEAIRSMVVRGAPAIGISAAYGIVLAARARIAEGGDWYAALEEDFMLLADSRPTAVNLFWALNRMHDRLDRLKENADPLAALEAEAIAIHESDREANLTMAQLGVDLIRKHQGNAQAILTHCNTGALATGGFGTALGVIRAAFIEGMVERVYADETRPWLQGSRLTAWELANEGIPVTLNADSAAAHIMKTKGVTWVIVGADRITANGDVANKIGTYQLAVNAMHHGVRFMVVAPSSTIDMNLASGDDIPIEERDGAELLEVGGKRVGADVEAFNPVFDVTPADLIDAIVTEKGIVERPDTAKMAQLMCRKRLH.

Residues 54–56, arginine 96, and glutamine 205 contribute to the substrate site; that span reads RGA. Residue aspartate 246 is the Proton donor of the active site. 256-257 serves as a coordination point for substrate; sequence NK.

It belongs to the eIF-2B alpha/beta/delta subunits family. MtnA subfamily.

It carries out the reaction 5-(methylsulfanyl)-alpha-D-ribose 1-phosphate = 5-(methylsulfanyl)-D-ribulose 1-phosphate. It functions in the pathway amino-acid biosynthesis; L-methionine biosynthesis via salvage pathway; L-methionine from S-methyl-5-thio-alpha-D-ribose 1-phosphate: step 1/6. Functionally, catalyzes the interconversion of methylthioribose-1-phosphate (MTR-1-P) into methylthioribulose-1-phosphate (MTRu-1-P). The polypeptide is Methylthioribose-1-phosphate isomerase (Pseudomonas fluorescens (strain Pf0-1)).